Reading from the N-terminus, the 78-residue chain is Acyl carrier protein (78 aa).

The Carrier domain occupies 2–77; the sequence is SSIEERVKKI…LAIDYINANL (76 aa). Serine 37 bears the O-(pantetheine 4'-phosphoryl)serine mark.

This sequence belongs to the acyl carrier protein (ACP) family. 4'-phosphopantetheine is transferred from CoA to a specific serine of apo-ACP by AcpS. This modification is essential for activity because fatty acids are bound in thioester linkage to the sulfhydryl of the prosthetic group.

It is found in the cytoplasm. Its pathway is lipid metabolism; fatty acid biosynthesis. Carrier of the growing fatty acid chain in fatty acid biosynthesis. This is Acyl carrier protein from Cellvibrio japonicus (strain Ueda107) (Pseudomonas fluorescens subsp. cellulosa).